The primary structure comprises 350 residues: Protein YIPF3 (350 aa).

Over residues 1-10 (MATTAAPAGG) the composition is skewed to low complexity. Residues 1 to 51 (MATTAAPAGGARNGAGPEWGGFEENIQGGGSAVIDMENMDDTSGSSFEDMG) form a disordered region. A2 carries the N-acetylalanine modification. Residues 2–148 (ATTAAPAGGA…PIKMVNFPQK (147 aa)) lie on the Cytoplasmic side of the membrane. The helical transmembrane segment at 149 to 169 (IAGELYGPLMLVFTLVAILLH) threads the bilayer. Topologically, residues 170–187 (GMKTSDTIIREGTLMGTA) are lumenal. Residues 188-208 (IGTCFGYWLGVSSFIYFLAYL) traverse the membrane as a helical segment. At 209–214 (CNAQIT) the chain is on the cytoplasmic side. The helical transmembrane segment at 215 to 237 (MLQMLALLGYGLFGHCIVLFITY) threads the bilayer. The Lumenal portion of the chain corresponds to 238-240 (NIH). A helical membrane pass occupies residues 241-263 (LHALFYLFWLLVGGLSTLRMVAV). The Cytoplasmic segment spans residues 264–274 (LVSRTVGPTQR). The chain crosses the membrane as a helical span at residues 275-295 (LLLCGTLAALHMLFLLYLHFA). Over 296 to 350 (YHKVVEGILDTLEGPNIPPIQRVPRDIPAMLPAARLPTTVLNATAKAVAVTLQSH) the chain is Lumenal. O-linked (GalNAc...) threonine glycosylation is found at T333 and T334. N-linked (GlcNAc...) asparagine glycosylation is present at N337. T339 and T346 each carry an O-linked (GalNAc...) threonine glycan.

This sequence belongs to the YIP1 family. In terms of assembly, interacts with YIPF4 and YIPF5. Post-translationally, N-glycosylated in the ER (40 kDa form I), then O-glycosylated in the Golgi apparatus (46 kDa form II), the C-terminal lumenal region is later removed in the Golgi apparatus to produce a 36 kDa form III. O-glycosylated with core 1-like and core 2-like glycans. O-glycan heterogeneity at Thr-346: HexNAc (minor), HexHexNAc (major), Hex1HexNAc2 (minor), Hex2HexNAc2 (minor) and dHex1Hex2HexNAc2 (minor). As to expression, expressed by nucleated hematopoietic cells (at protein level).

The protein localises to the cell membrane. It localises to the cytoplasm. It is found in the golgi apparatus. The protein resides in the cis-Golgi network membrane. Its function is as follows. Involved in the maintenance of the Golgi structure. May play a role in hematopoiesis. In Homo sapiens (Human), this protein is Protein YIPF3 (YIPF3).